Here is a 138-residue protein sequence, read N- to C-terminus: uncharacterized protein (138 aa).

This is an uncharacterized protein from Methanocaldococcus jannaschii (strain ATCC 43067 / DSM 2661 / JAL-1 / JCM 10045 / NBRC 100440) (Methanococcus jannaschii).